The primary structure comprises 57 residues: Large ribosomal subunit protein bL32 (57 aa).

Positions 1–20 (MAVPKRRMSRSNTRSRRAQW) are enriched in basic residues. The interval 1-22 (MAVPKRRMSRSNTRSRRAQWKA) is disordered.

This sequence belongs to the bacterial ribosomal protein bL32 family.

The chain is Large ribosomal subunit protein bL32 from Mycobacterium sp. (strain JLS).